Here is a 448-residue protein sequence, read N- to C-terminus: Binary larvicide subunit BinB (448 aa).

The interval 1–198 (MCDSKDNSGV…TAFVNSSFYA (198 aa)) is beta-trefoil domain. Cys67 and Cys161 are disulfide-bonded. Positions 199 to 448 (AAIPQLPQTS…NEELIPKINQ (250 aa)) are probable pore-forming domain.

This sequence belongs to the toxin_10 family. Forms a heterodimer with BinA. In terms of processing, processed by proteases extracted from mosquito larval gut.

The protein resides in the spore. The protein localises to the perispore. Functionally, component of a binary toxin active against Culex and some Aedes mosquito larvae; mortality towards both C.quinquefasciatus and A.atropalpus is maximal by 48 hours. A.aegypti is not very susceptible to this toxin. This subunit is responsible for localized binding to specific regions of the host larval gut. Binary toxin internalization into host gut cells requires both proteins. This is Binary larvicide subunit BinB (binB) from Lysinibacillus sphaericus (Bacillus sphaericus).